Here is a 183-residue protein sequence, read N- to C-terminus: NADH dehydrogenase [ubiquinone] iron-sulfur protein 4, mitochondrial (183 aa).

A mitochondrion-targeting transit peptide spans 1-28 (MSALRQVMCRSTASLQLYQANRAAAARW). Ser-181 is modified (phosphoserine).

This sequence belongs to the complex I NDUFS4 subunit family.

The protein resides in the mitochondrion inner membrane. Accessory subunit of the mitochondrial membrane respiratory chain NADH dehydrogenase (Complex I), that is believed not to be involved in catalysis. Complex I functions in the transfer of electrons from NADH to the respiratory chain. The immediate electron acceptor for the enzyme is believed to be ubiquinone. This is NADH dehydrogenase [ubiquinone] iron-sulfur protein 4, mitochondrial from Drosophila melanogaster (Fruit fly).